Consider the following 214-residue polypeptide: A-type ATP synthase subunit D (214 aa).

This sequence belongs to the V-ATPase D subunit family. As to quaternary structure, has multiple subunits with at least A(3), B(3), C, D, E, F, H, I and proteolipid K(x).

The protein localises to the cell membrane. In terms of biological role, component of the A-type ATP synthase that produces ATP from ADP in the presence of a proton gradient across the membrane. The sequence is that of A-type ATP synthase subunit D from Desulfurococcus sp. (strain SY).